Consider the following 701-residue polypeptide: Translation initiation factor IF-2 (701 aa).

Positions 48–62 (KIYKPEKAEQSEKSQ) are enriched in basic and acidic residues. The interval 48-123 (KIYKPEKAEQ…EPKEMPSKIT (76 aa)) is disordered. 2 stretches are compositionally biased toward low complexity: residues 63-89 (QKNT…NNKP) and 97-109 (NNKN…NNKQ). Positions 110 to 119 (PKQEEPKEMP) are enriched in basic and acidic residues. The tr-type G domain occupies 203–372 (ERPAVVTIMG…VLTSEVQELK (170 aa)). The interval 212–219 (GHVDHGKT) is G1. A GTP-binding site is contributed by 212 to 219 (GHVDHGKT). The interval 237-241 (GITQH) is G2. Residues 258-261 (DTPG) form a G3 region. Residues 258–262 (DTPGH) and 312–315 (NKID) contribute to the GTP site. A G4 region spans residues 312-315 (NKID). The segment at 348–350 (SAL) is G5.

The protein belongs to the TRAFAC class translation factor GTPase superfamily. Classic translation factor GTPase family. IF-2 subfamily.

It is found in the cytoplasm. In terms of biological role, one of the essential components for the initiation of protein synthesis. Protects formylmethionyl-tRNA from spontaneous hydrolysis and promotes its binding to the 30S ribosomal subunits. Also involved in the hydrolysis of GTP during the formation of the 70S ribosomal complex. The polypeptide is Translation initiation factor IF-2 (Staphylococcus saprophyticus subsp. saprophyticus (strain ATCC 15305 / DSM 20229 / NCIMB 8711 / NCTC 7292 / S-41)).